The chain runs to 664 residues: Acetolactate synthase 2, chloroplastic (664 aa).

Positions 1-34 are enriched in low complexity; the sequence is MAAAAAAPSPSFSKTLSSSSSKSSTLLPRSTFPF. The interval 1–51 is disordered; it reads MAAAAAAPSPSFSKTLSSSSSKSSTLLPRSTFPFPHHPHKTTPPPLHLTPT. The N-terminal 91 residues, 1–91, are a transit peptide targeting the chloroplast; it reads MAAAAAAPSP…VSRFAPDEPR (91 aa). Glutamate 138 serves as a coordination point for thiamine diphosphate. The cysteines at positions 158 and 304 are disulfide-linked. FAD-binding positions include arginine 240, 346–367, and 389–408; these read HGTVYANYAVDSSDLLLAFGVR and DIDSAEIGKNKQPHVSICAD. The tract at residues 481–561 is thiamine pyrophosphate binding; that stretch reads QHQMWAAQYY…VKIMLLNNQH (81 aa). Positions 532 and 559 each coordinate Mg(2+).

This sequence belongs to the TPP enzyme family. Mg(2+) is required as a cofactor. The cofactor is thiamine diphosphate.

Its subcellular location is the plastid. The protein resides in the chloroplast. It catalyses the reaction 2 pyruvate + H(+) = (2S)-2-acetolactate + CO2. The protein operates within amino-acid biosynthesis; L-isoleucine biosynthesis; L-isoleucine from 2-oxobutanoate: step 1/4. It functions in the pathway amino-acid biosynthesis; L-valine biosynthesis; L-valine from pyruvate: step 1/4. The chain is Acetolactate synthase 2, chloroplastic (ALS SURB) from Nicotiana tabacum (Common tobacco).